Consider the following 360-residue polypeptide: Peptide chain release factor 1 (360 aa).

N5-methylglutamine is present on glutamine 235.

It belongs to the prokaryotic/mitochondrial release factor family. Methylated by PrmC. Methylation increases the termination efficiency of RF1.

The protein resides in the cytoplasm. In terms of biological role, peptide chain release factor 1 directs the termination of translation in response to the peptide chain termination codons UAG and UAA. The polypeptide is Peptide chain release factor 1 (Methylobacillus flagellatus (strain ATCC 51484 / DSM 6875 / VKM B-1610 / KT)).